We begin with the raw amino-acid sequence, 343 residues long: Small ribosomal subunit biogenesis GTPase RsgA (343 aa).

The CP-type G domain maps to 116–275 (RGQLKPVAAN…LIDSPGIREF (160 aa)). GTP is bound by residues 163 to 166 (NKAD) and 217 to 225 (GQSGVGKSS). Zn(2+) is bound by residues cysteine 299, cysteine 304, histidine 306, and cysteine 312.

This sequence belongs to the TRAFAC class YlqF/YawG GTPase family. RsgA subfamily. In terms of assembly, monomer. Associates with 30S ribosomal subunit, binds 16S rRNA. Zn(2+) serves as cofactor.

Its subcellular location is the cytoplasm. One of several proteins that assist in the late maturation steps of the functional core of the 30S ribosomal subunit. Helps release RbfA from mature subunits. May play a role in the assembly of ribosomal proteins into the subunit. Circularly permuted GTPase that catalyzes slow GTP hydrolysis, GTPase activity is stimulated by the 30S ribosomal subunit. The polypeptide is Small ribosomal subunit biogenesis GTPase RsgA (Pseudomonas syringae pv. syringae (strain B728a)).